The following is a 565-amino-acid chain: MAKTTKVKGNKKKSDTSKVVSKVSRKRSHEDSESEVEDNEKVVEELDADFDEVAGLLGDDIEDPESKSQSKKEKQKAKDEAKLEQLTKPQVSNEVPDNDNDDDSSEDVLFENADFSEPTMKAIKEMGFTKMTKVQAKTIPPLLAGRDVLGAAKTGSGKTLAFLIPAIELLYSLKIKPRNGTAVIIITPTRELALQIFGVARELMQFHSQTCGIVIGGADRRQEATKLAKGVNLLVATPGRLLDHLKNTQFVFSNLKALVIDEADRILEIGFEDEMKQIIKVLPNENRQSMLFSATQTTKVEDLARISLRPGPLYINVVPEKDVSTADGLEQGYVVCDSDKRFLLLFSFLKRNVKKKIIVFLSSCNSVKFYSELLNYIDLPVLDLHGKQKQQKRTNTFFEFCNAKQGILVCTDVAARGLDIPAVDWIVQFDPPDDPRDYIHRVGRTARGTQGKGKSLMFLTPSELGFLRYLKAAKVPLNEYEFPANKIANIQSQLTKLIKTNYLLNQSAKDGYRAYLQAYASHGLKTVYQIDKLDLKKVSASFGLDQVPRVNLSIGGTKTKKQKRS.

The span at 1–11 (MAKTTKVKGNK) shows a compositional bias: basic residues. The disordered stretch occupies residues 1–106 (MAKTTKVKGN…DNDNDDDSSE (106 aa)). Residues 26–85 (KRSHEDSESEVEDNEKVVEELDADFDEVAGLLGDDIEDPESKSQSKKEKQKAKDEAKLEQ) adopt a coiled-coil conformation. Basic and acidic residues predominate over residues 64-85 (PESKSQSKKEKQKAKDEAKLEQ). Positions 96 to 106 (PDNDNDDDSSE) are enriched in acidic residues. The short motif at 108–136 (VLFENADFSEPTMKAIKEMGFTKMTKVQA) is the Q motif element. The Helicase ATP-binding domain maps to 139-314 (IPPLLAGRDV…RISLRPGPLY (176 aa)). 152–159 (AKTGSGKT) is a binding site for ATP. The DEAD box motif lies at 261–264 (DEAD). The Helicase C-terminal domain maps to 328 to 498 (GLEQGYVVCD…NIQSQLTKLI (171 aa)). The short motif at 340-356 (KRFLLLFSFLKRNVKKK) is the Bipartite nuclear localization signal element.

This sequence belongs to the DEAD box helicase family. DDX18/HAS1 subfamily. As to quaternary structure, associates in the nucleolus with the 60S and pre-60S ribosomal subunits.

Its subcellular location is the nucleus. It localises to the nucleolus. The enzyme catalyses ATP + H2O = ADP + phosphate + H(+). ATP-dependent RNA helicase involved in 40S ribosomal subunit biogenesis. Required for the processing and cleavage of 35S pre-rRNA at sites A0, A1, and A2, leading to mature 18S rRNA. The sequence is that of ATP-dependent RNA helicase HAS1 (HAS1) from Candida albicans (strain SC5314 / ATCC MYA-2876) (Yeast).